The sequence spans 55 residues: Large ribosomal subunit protein bL33 (55 aa).

A compositionally biased stretch (basic and acidic residues) spans 1–11 (MAKGGREKIKL). The tract at residues 1–29 (MAKGGREKIKLESTAGTGHFYTTTKNKKT) is disordered. Positions 14 to 24 (TAGTGHFYTTT) are enriched in polar residues.

This sequence belongs to the bacterial ribosomal protein bL33 family.

The polypeptide is Large ribosomal subunit protein bL33 (Thiobacillus denitrificans (strain ATCC 25259 / T1)).